The sequence spans 66 residues: MSIGIWQIAIVVILVVLLFGRGKISSLMGDVAKGIKSFKKGMATDITDEPEPKNVSENNQDSKDKE.

The helical transmembrane segment at Met-1–Arg-21 threads the bilayer. Positions Ala-43–Glu-66 are disordered. Positions Pro-50 to Glu-66 are enriched in basic and acidic residues.

Belongs to the TatA/E family. As to quaternary structure, the Tat system comprises two distinct complexes: a TatABC complex, containing multiple copies of TatA, TatB and TatC subunits, and a separate TatA complex, containing only TatA subunits. Substrates initially bind to the TatABC complex, which probably triggers association of the separate TatA complex to form the active translocon.

It localises to the cell inner membrane. Part of the twin-arginine translocation (Tat) system that transports large folded proteins containing a characteristic twin-arginine motif in their signal peptide across membranes. TatA could form the protein-conducting channel of the Tat system. The chain is Sec-independent protein translocase protein TatA from Pelagibacter ubique (strain HTCC1062).